The chain runs to 407 residues: 1-deoxy-D-xylulose 5-phosphate reductoisomerase (407 aa).

Thr25, Gly26, Ser27, Ile28, Asn53, and Asn136 together coordinate NADPH. Lys137 lines the 1-deoxy-D-xylulose 5-phosphate pocket. Residue Glu138 participates in NADPH binding. Asp162 provides a ligand contact to Mn(2+). 1-deoxy-D-xylulose 5-phosphate-binding residues include Ser163, Glu164, Ser188, and His211. Residue Glu164 participates in Mn(2+) binding. Gly217 contacts NADPH. 4 residues coordinate 1-deoxy-D-xylulose 5-phosphate: Ser224, Asn229, Lys230, and Glu233. Glu233 serves as a coordination point for Mn(2+).

Belongs to the DXR family. It depends on Mg(2+) as a cofactor. Mn(2+) serves as cofactor.

It catalyses the reaction 2-C-methyl-D-erythritol 4-phosphate + NADP(+) = 1-deoxy-D-xylulose 5-phosphate + NADPH + H(+). The protein operates within isoprenoid biosynthesis; isopentenyl diphosphate biosynthesis via DXP pathway; isopentenyl diphosphate from 1-deoxy-D-xylulose 5-phosphate: step 1/6. In terms of biological role, catalyzes the NADPH-dependent rearrangement and reduction of 1-deoxy-D-xylulose-5-phosphate (DXP) to 2-C-methyl-D-erythritol 4-phosphate (MEP). The sequence is that of 1-deoxy-D-xylulose 5-phosphate reductoisomerase from Bradyrhizobium sp. (strain ORS 278).